A 461-amino-acid chain; its full sequence is Coagulation factor IX (461 aa).

Positions 1-28 (MQRVNMIMAESPGLITICLLGYLLSAEC) are cleaved as a signal peptide. A propeptide spanning residues 29–46 (TVFLDHENANKILNRPKR) is cleaved from the precursor. Positions 47, 48, 53, 54, 61, 63, 66, 67, 72, 73, and 76 each coordinate Ca(2+). The region spanning 47–92 (YNSGKLEEFVQGNLERECMEEKCSFEEAREVFENTERTTEFWKQYV) is the Gla domain. Glu-53, Glu-54, Glu-61, Glu-63, Glu-66, Glu-67, Glu-72, Glu-73, Glu-76, Glu-79, and Glu-82 each carry 4-carboxyglutamate. Glu-61 is a Mg(2+) binding site. Cys-64 and Cys-69 are joined by a disulfide. Residue Glu-66 participates in Mg(2+) binding. Residue Glu-72 coordinates Mg(2+). A Mg(2+)-binding site is contributed by Glu-76. Residue Glu-82 coordinates Ca(2+). Glu-82 is a binding site for Mg(2+). Thr-85 is a glycosylation site (O-linked (GalNAc...) threonine). Residues Glu-86, Asp-93, Gly-94, and Gln-96 each contribute to the Ca(2+) site. A 4-carboxyglutamate modification is found at Glu-86. Glu-86 contacts Mg(2+). Positions 93 to 129 (DGDQCESNPCLNGGSCKDDINSYECWCPFGFEGKNCE) constitute an EGF-like 1; calcium-binding domain. 10 disulfide bridges follow: Cys-97/Cys-108, Cys-102/Cys-117, Cys-119/Cys-128, Cys-134/Cys-145, Cys-141/Cys-155, Cys-157/Cys-170, Cys-178/Cys-335, Cys-252/Cys-268, Cys-382/Cys-396, and Cys-407/Cys-435. Ser-99 is a glycosylation site (O-linked (Glc...) serine). Residue Ser-107 is glycosylated (O-linked (Fuc...) serine). Ca(2+) contacts are provided by Asp-110 and Asp-111. Residue Asp-110 is modified to (3R)-3-hydroxyaspartate. Ser-114 carries the post-translational modification Phosphoserine. Residues 130-171 (LDVTCNIKNGRCEQFCKNSADNKVVCSCTEGYRLAENQKSCE) enclose the EGF-like 2 domain. The propeptide at 192–226 (AETVFPDVDYVNSTEAETILDNITQSTQSFNDFTR) is activation peptide. Tyr-201 is modified (sulfotyrosine). Asn-203 carries N-linked (GlcNAc...) asparagine glycosylation. Ser-204 bears the Phosphoserine mark. The residue at position 205 (Thr-205) is a Phosphothreonine; alternate. The O-linked (GalNAc...) threonine; alternate glycan is linked to Thr-205. Asn-213 carries N-linked (GlcNAc...) asparagine glycosylation. O-linked (GalNAc...) threonine glycans are attached at residues Thr-215 and Thr-225. Residues 227 to 459 (VVGGEDAKPG…YVNWIKEKTK (233 aa)) enclose the Peptidase S1 domain. The active-site Charge relay system is the His-267. Ca(2+)-binding residues include Glu-281, Asn-283, Glu-286, Glu-288, and Glu-291. Asp-315 functions as the Charge relay system in the catalytic mechanism. Catalysis depends on Ser-411, which acts as the Charge relay system.

It belongs to the peptidase S1 family. As to quaternary structure, heterodimer of a light chain and a heavy chain; disulfide-linked. Interacts (inactive and activated) with F11 (activated) in calcium-dependent manner. Interacts with SERPINC1. Interacts (activated) with iripin-8, a serine protease inhibitor from Ixodes ricinus saliva. Interacts (inactive and activated) with nitrophorin-2, an anticoagulant protein from Rhodnius prolixus. Post-translationally, activated by factor XIa, which excises the activation peptide. The propeptide can also be removed by snake venom protease. Activated by coagulation factor VIIa-tissue factor (F7-F3) complex in calcium-dependent manner. In terms of processing, the iron and 2-oxoglutarate dependent 3-hydroxylation of aspartate and asparagine is (R) stereospecific within EGF domains. In terms of tissue distribution, detected in blood plasma (at protein level). Synthesized primarily in the liver and secreted in plasma.

It is found in the secreted. It carries out the reaction Selective cleavage of Arg-|-Ile bond in factor X to form factor Xa.. Functionally, factor IX is a vitamin K-dependent plasma protein that participates in the intrinsic pathway of blood coagulation by converting factor X to its active form in the presence of Ca(2+) ions, phospholipids, and factor VIIIa. The sequence is that of Coagulation factor IX (F9) from Homo sapiens (Human).